A 380-amino-acid polypeptide reads, in one-letter code: Mitogen-activated protein kinase 3 (380 aa).

An N-acetylalanine modification is found at Ala-2. The Protein kinase domain occupies 43–331; that stretch reads YTQLQYIGEG…VEEALAHPYL (289 aa). Residues 49–57 and Lys-72 contribute to the ATP site; that span reads IGEGAYGMV. Residue Asp-167 is the Proton acceptor of the active site. Phosphothreonine is present on Thr-199. The residue at position 203 (Thr-203) is a Phosphothreonine; by MAP2K1 and MAP2K2. A TXY motif is present at residues 203–205; that stretch reads TEY. The residue at position 205 (Tyr-205) is a Phosphotyrosine; by MAP2K1 and MAP2K2. Thr-208 is modified (phosphothreonine; by autocatalysis).

It belongs to the protein kinase superfamily. CMGC Ser/Thr protein kinase family. MAP kinase subfamily. Binds both upstream activators and downstream substrates in multimolecular complexes. Found in a complex with at least BRAF, HRAS, MAP2K1/MEK1, MAPK3 and RGS14. Interacts with TPR. Interacts with ADAM15, ARRB2, CANX, DAPK1 (via death domain), HSF4, IER3, MAP2K1/MEK1, NISCH, and SGK1. Interacts with MORG1. Interacts with PEA15. Interacts with isoform 1 of MKNK2 and this binding prevents from dephosphorylation and inactivation. Interacts with CDKN2AIP. Interacts with HSF1 (via D domain and preferentially with hyperphosphorylated form); this interaction occurs upon heat shock. Interacts with CAVIN4. Interacts with GIT1; this interaction is necessary for MAPK3 localization to focal adhesions. Interacts with ZNF263. Interacts with EBF4. Mg(2+) serves as cofactor. In terms of processing, dually phosphorylated on Thr-203 and Tyr-205, which activates the enzyme. Ligand-activated ALK induces tyrosine phosphorylation. Dephosphorylated by PTPRJ at Tyr-205. Autophosphorylated on threonine and tyrosine residues in vitro. Phosphorylated upon FLT3 and KIT signaling. Ubiquitinated by TRIM15 via 'Lys-63'-linked ubiquitination; leading to activation. Deubiquitinated by CYLD.

The protein localises to the cytoplasm. It localises to the nucleus. It is found in the membrane. The protein resides in the caveola. Its subcellular location is the cell junction. The protein localises to the focal adhesion. The enzyme catalyses L-seryl-[protein] + ATP = O-phospho-L-seryl-[protein] + ADP + H(+). It catalyses the reaction L-threonyl-[protein] + ATP = O-phospho-L-threonyl-[protein] + ADP + H(+). Its activity is regulated as follows. Phosphorylated by MAP2K1/MEK1 and MAP2K2/MEK2 on Thr-203 and Tyr-205 in response to external stimuli like insulin or NGF. Both phosphorylations are required for activity. This phosphorylation causes dramatic conformational changes, which enable full activation and interaction of MAPK1/ERK2 with its substrates. Dephosphorylated and inactivated by DUSP3, DUSP6 and DUSP9. Its function is as follows. Serine/threonine kinase which acts as an essential component of the MAP kinase signal transduction pathway. MAPK1/ERK2 and MAPK3/ERK1 are the 2 MAPKs which play an important role in the MAPK/ERK cascade. They participate also in a signaling cascade initiated by activated KIT and KITLG/SCF. Depending on the cellular context, the MAPK/ERK cascade mediates diverse biological functions such as cell growth, adhesion, survival and differentiation through the regulation of transcription, translation, cytoskeletal rearrangements. The MAPK/ERK cascade also plays a role in initiation and regulation of meiosis, mitosis, and postmitotic functions in differentiated cells by phosphorylating a number of transcription factors. About 160 substrates have already been discovered for ERKs. Many of these substrates are localized in the nucleus, and seem to participate in the regulation of transcription upon stimulation. However, other substrates are found in the cytosol as well as in other cellular organelles, and those are responsible for processes such as translation, mitosis and apoptosis. Moreover, the MAPK/ERK cascade is also involved in the regulation of the endosomal dynamics, including lysosome processing and endosome cycling through the perinuclear recycling compartment (PNRC); as well as in the fragmentation of the Golgi apparatus during mitosis. The substrates include transcription factors (such as ATF2, BCL6, ELK1, ERF, FOS, HSF4 or SPZ1), cytoskeletal elements (such as CANX, CTTN, GJA1, MAP2, MAPT, PXN, SORBS3 or STMN1), regulators of apoptosis (such as BAD, BTG2, CASP9, DAPK1, IER3, MCL1 or PPARG), regulators of translation (such as EIF4EBP1) and a variety of other signaling-related molecules (like ARHGEF2, DEPTOR, FRS2 or GRB10). Protein kinases (such as RAF1, RPS6KA1/RSK1, RPS6KA3/RSK2, RPS6KA2/RSK3, RPS6KA6/RSK4, SYK, MKNK1/MNK1, MKNK2/MNK2, RPS6KA5/MSK1, RPS6KA4/MSK2, MAPKAPK3 or MAPKAPK5) and phosphatases (such as DUSP1, DUSP4, DUSP6 or DUSP16) are other substrates which enable the propagation the MAPK/ERK signal to additional cytosolic and nuclear targets, thereby extending the specificity of the cascade. This is Mitogen-activated protein kinase 3 (Mapk3) from Mus musculus (Mouse).